The following is a 366-amino-acid chain: Succinyl-diaminopimelate desuccinylase (366 aa).

His66 is a Zn(2+) binding site. The active site involves Asp68. Residue Asp97 coordinates Zn(2+). The active-site Proton acceptor is Glu127. 3 residues coordinate Zn(2+): Glu128, Glu156, and His341.

This sequence belongs to the peptidase M20A family. DapE subfamily. As to quaternary structure, homodimer. It depends on Zn(2+) as a cofactor. Co(2+) serves as cofactor.

The catalysed reaction is N-succinyl-(2S,6S)-2,6-diaminopimelate + H2O = (2S,6S)-2,6-diaminopimelate + succinate. The protein operates within amino-acid biosynthesis; L-lysine biosynthesis via DAP pathway; LL-2,6-diaminopimelate from (S)-tetrahydrodipicolinate (succinylase route): step 3/3. In terms of biological role, catalyzes the hydrolysis of N-succinyl-L,L-diaminopimelic acid (SDAP), forming succinate and LL-2,6-diaminopimelate (DAP), an intermediate involved in the bacterial biosynthesis of lysine and meso-diaminopimelic acid, an essential component of bacterial cell walls. The polypeptide is Succinyl-diaminopimelate desuccinylase (Aliarcobacter butzleri (strain RM4018) (Arcobacter butzleri)).